A 319-amino-acid chain; its full sequence is Acetyl esterase (319 aa).

Positions 91–93 (HGG) match the Involved in the stabilization of the negatively charged intermediate by the formation of the oxyanion hole motif. Catalysis depends on residues Ser165, Asp262, and His292.

It belongs to the 'GDXG' lipolytic enzyme family. In terms of assembly, homodimer. Interacts with MalT and MelA.

The protein localises to the cytoplasm. Displays esterase activity towards short chain fatty esters (acyl chain length of up to 8 carbons). Able to hydrolyze triacetylglycerol (triacetin) and tributyrylglycerol (tributyrin), but not trioleylglycerol (triolein) or cholesterol oleate. Negatively regulates MalT activity by antagonizing maltotriose binding. Inhibits MelA galactosidase activity. This chain is Acetyl esterase, found in Escherichia coli O81 (strain ED1a).